The following is a 741-amino-acid chain: Phosphoribosylformylglycinamidine synthase subunit PurL (741 aa).

Histidine 53 is a catalytic residue. Tyrosine 56 and lysine 95 together coordinate ATP. A Mg(2+)-binding site is contributed by glutamate 97. Substrate is bound by residues 98–101 and arginine 120; that span reads SHNH. Residue histidine 99 is the Proton acceptor of the active site. Aspartate 121 is a Mg(2+) binding site. A substrate-binding site is contributed by glutamine 244. Aspartate 274 is a Mg(2+) binding site. Residue 318–320 participates in substrate binding; that stretch reads ESQ. 2 residues coordinate ATP: aspartate 501 and glycine 538. Asparagine 539 serves as a coordination point for Mg(2+). Serine 541 contacts substrate.

Belongs to the FGAMS family. As to quaternary structure, monomer. Part of the FGAM synthase complex composed of 1 PurL, 1 PurQ and 2 PurS subunits.

Its subcellular location is the cytoplasm. It catalyses the reaction N(2)-formyl-N(1)-(5-phospho-beta-D-ribosyl)glycinamide + L-glutamine + ATP + H2O = 2-formamido-N(1)-(5-O-phospho-beta-D-ribosyl)acetamidine + L-glutamate + ADP + phosphate + H(+). It functions in the pathway purine metabolism; IMP biosynthesis via de novo pathway; 5-amino-1-(5-phospho-D-ribosyl)imidazole from N(2)-formyl-N(1)-(5-phospho-D-ribosyl)glycinamide: step 1/2. Functionally, part of the phosphoribosylformylglycinamidine synthase complex involved in the purines biosynthetic pathway. Catalyzes the ATP-dependent conversion of formylglycinamide ribonucleotide (FGAR) and glutamine to yield formylglycinamidine ribonucleotide (FGAM) and glutamate. The FGAM synthase complex is composed of three subunits. PurQ produces an ammonia molecule by converting glutamine to glutamate. PurL transfers the ammonia molecule to FGAR to form FGAM in an ATP-dependent manner. PurS interacts with PurQ and PurL and is thought to assist in the transfer of the ammonia molecule from PurQ to PurL. The protein is Phosphoribosylformylglycinamidine synthase subunit PurL of Ligilactobacillus salivarius (strain UCC118) (Lactobacillus salivarius).